A 416-amino-acid polypeptide reads, in one-letter code: Hemagglutinin-esterase (416 aa).

The signal sequence occupies residues 1–14; that stretch reads MLSLILFFPSFAFA. The tract at residues 4–121 is esterase domain first part; the sequence is LILFFPSFAF…GVDSYMELKT (118 aa). Residues 15-393 are Virion surface-facing; the sequence is VTPVTPYFGP…ESVDVISSSY (379 aa). The active-site Nucleophile is the Ser-37. A disulfide bridge connects residues Cys-41 and Cys-57. N-linked (GlcNAc...) asparagine; by host glycans are attached at residues Asn-59 and Asn-76. 5 disulfide bridges follow: Cys-88-Cys-136, Cys-108-Cys-156, Cys-192-Cys-273, Cys-200-Cys-246, and Cys-206-Cys-213. The tract at residues 122 to 263 is receptor binding; it reads SFNIKLNQMA…GTHNASIVGN (142 aa). 3 N-linked (GlcNAc...) asparagine; by host glycosylation sites follow: Asn-257, Asn-278, and Asn-294. The tract at residues 264 to 379 is esterase domain second part; it reads FLFYPTKSYC…SCPQYVKLFD (116 aa). Cys-304 and Cys-309 are disulfide-bonded. An N-linked (GlcNAc...) asparagine; by host glycan is attached at Asn-322. His-328 serves as the catalytic Charge relay system. Asn-343 is a glycosylation site (N-linked (GlcNAc...) asparagine; by host). Cys-346 and Cys-371 are oxidised to a cystine. The chain crosses the membrane as a helical span at residues 394 to 414; it reads FVATWVLLVVVVILIFVIISF. Residues 415–416 lie on the Intravirion side of the membrane; sequence FC.

Belongs to the influenza type C/coronaviruses hemagglutinin-esterase family. As to quaternary structure, homodimer. Post-translationally, N-glycosylated.

The protein localises to the virion membrane. It is found in the host cell membrane. The enzyme catalyses N-acetyl-9-O-acetylneuraminate + H2O = N-acetylneuraminate + acetate + H(+). It catalyses the reaction N-acetyl-4-O-acetylneuraminate + H2O = N-acetylneuraminate + acetate + H(+). Structural protein that makes short spikes at the surface of the virus. Contains receptor binding and receptor-destroying activities. Mediates de-O-acetylation of N-acetyl-9-O-acetylneuraminic acid, which is probably the receptor determinant recognized by the virus on the surface of erythrocytes and susceptible cells. This receptor-destroying activity is important for virus release as it probably helps preventing self-aggregation and ensures the efficient spread of the progeny virus from cell to cell. May serve as a secondary viral attachment protein for initiating infection, the spike protein being the major one. Seems to be a 'luxury' protein that is not absolutely necessary for virus infection in culture. However, its presence in the virus may alter its pathogenicity. May become a target for both the humoral and the cellular branches of the immune system. This chain is Hemagglutinin-esterase (HE), found in Homo sapiens (Human).